The sequence spans 717 residues: P-loop NTPase domain-containing protein LPA1 homolog 2 (717 aa).

Disordered stretches follow at residues 235–259 (KKLK…SSTT) and 532–629 (HYSS…DTIS). 2 stretches are compositionally biased toward polar residues: residues 243 to 259 (VNSN…SSTT) and 532 to 545 (HYSS…TSDG). Acidic residues predominate over residues 559–582 (SDEDDEEGDDDFHEPDSDEDLSDN). Residues 583-602 (NDERNRDEIGSVDEESTKSD) show a composition bias toward basic and acidic residues.

In terms of biological role, may be not required for the accumulation of phytic acid in seeds. Phytic acid is the primary storage form of phosphorus in cereal grains and other plant seeds. This chain is P-loop NTPase domain-containing protein LPA1 homolog 2, found in Arabidopsis thaliana (Mouse-ear cress).